A 215-amino-acid chain; its full sequence is Large ribosomal subunit protein bL25 (215 aa).

The interval 170–215 (DPDTSVASVTPPTTEEDLDTDDVDENAEPELVGAENDSADEESENK) is disordered. Acidic residues-rich tracts occupy residues 183–197 (TEED…ENAE) and 206–215 (DSADEESENK).

This sequence belongs to the bacterial ribosomal protein bL25 family. CTC subfamily. As to quaternary structure, part of the 50S ribosomal subunit; part of the 5S rRNA/L5/L18/L25 subcomplex. Contacts the 5S rRNA. Binds to the 5S rRNA independently of L5 and L18.

In terms of biological role, this is one of the proteins that binds to the 5S RNA in the ribosome where it forms part of the central protuberance. In Oceanobacillus iheyensis (strain DSM 14371 / CIP 107618 / JCM 11309 / KCTC 3954 / HTE831), this protein is Large ribosomal subunit protein bL25.